A 181-amino-acid chain; its full sequence is Protein AC41 (181 aa).

Plays a role in late gene expression. The polypeptide is Protein AC41 (AC41) (Autographa californica nuclear polyhedrosis virus (AcMNPV)).